The following is a 293-amino-acid chain: Peptidoglycan deacetylase (293 aa).

Zn(2+) is bound by residues aspartate 14, histidine 86, and histidine 90. Positions 29–276 (PDDISRGLFA…INKHEGVRWV (248 aa)) constitute a NodB homology domain.

The protein belongs to the polysaccharide deacetylase family. In terms of assembly, homotetramer.

The enzyme catalyses Deacetylation of xylans and xylo-oligosaccharides.. Its function is as follows. Catalyzes the N-deacetylation of peptidoglycan (PG), an important mechanism that appears to confer lysozyme resistance and to mitigate host immune detection; this likely contributes to pathogen persistence in the host. The exact nature of the residue in PG that is deacetylated has not been determined. Is also able to catalyze the deacetylation of acetylated xylan, and, to a lesser extent, that of chitin and chitosan. Therefore, this enzyme might play a role during infection, considering that xylan-containing carbohydrate structures are among those commonly consumed by humans. The chain is Peptidoglycan deacetylase (pgdA) from Helicobacter pylori (strain ATCC 700392 / 26695) (Campylobacter pylori).